Consider the following 455-residue polypeptide: D-arabinitol 4-dehydrogenase (455 aa).

The protein belongs to the mannitol dehydrogenase family. Monomer.

The catalysed reaction is D-arabinitol + NAD(+) = D-xylulose + NADH + H(+). It participates in carbohydrate metabolism; D-arabinitol metabolism. The chain is D-arabinitol 4-dehydrogenase (dalD) from Klebsiella pneumoniae.